Reading from the N-terminus, the 954-residue chain is Valine--tRNA ligase (954 aa).

The 'HIGH' region motif lies at 48–58 (PNVTGSLHMGH). The 'KMSKS' region signature appears at 560–564 (KMSKS). Lys-563 is an ATP binding site. A coiled-coil region spans residues 883–953 (AGFINKEAEL…IQEQYKAIEA (71 aa)).

It belongs to the class-I aminoacyl-tRNA synthetase family. ValS type 1 subfamily. As to quaternary structure, monomer.

The protein resides in the cytoplasm. The enzyme catalyses tRNA(Val) + L-valine + ATP = L-valyl-tRNA(Val) + AMP + diphosphate. Catalyzes the attachment of valine to tRNA(Val). As ValRS can inadvertently accommodate and process structurally similar amino acids such as threonine, to avoid such errors, it has a 'posttransfer' editing activity that hydrolyzes mischarged Thr-tRNA(Val) in a tRNA-dependent manner. The sequence is that of Valine--tRNA ligase from Haemophilus influenzae (strain 86-028NP).